The sequence spans 521 residues: Phomenoic acid biosynthesis cluster-specific transcriptional regulator (521 aa).

Positions 46 to 76 form a DNA-binding region, zn(2)-C6 fungal-type; it reads HCWQCRRSCVVCDFTQPGCQRCSAAGVSCPG.

The protein resides in the nucleus. In terms of biological role, transcriptional regulator; part of the gene cluster that mediates the biosynthesis of phomenoic acid, a long chain aliphatic carboxylic acid that does not appear to be essential for pathogenicity but may play a role in allowing to outcompete other fungi in the environmental niche via its antifungal properties. Positively regulates the expression of the cluster and subsequent production of phomenoic acid. This chain is Phomenoic acid biosynthesis cluster-specific transcriptional regulator, found in Leptosphaeria maculans (strain JN3 / isolate v23.1.3 / race Av1-4-5-6-7-8) (Blackleg fungus).